The sequence spans 322 residues: Probable cardiolipin synthase (CMP-forming) (322 aa).

3 helical membrane-spanning segments follow: residues 143 to 163 (IGYV…AFAG), 199 to 219 (LVIS…IVVF), and 289 to 309 (LQGL…SYVM).

Belongs to the CDP-alcohol phosphatidyltransferase class-I family.

Its subcellular location is the mitochondrion inner membrane. The catalysed reaction is a CDP-1,2-diacyl-sn-glycerol + a 1,2-diacyl-sn-glycero-3-phospho-(1'-sn-glycerol) = a cardiolipin + CMP + H(+). Catalyzes the synthesis of cardiolipin (CL) (diphosphatidylglycerol) by specifically transferring a phosphatidyl group from CDP-diacylglycerol to phosphatidylglycerol (PG). CL is a key phospholipid in mitochondrial membranes and plays important roles in maintaining the functional integrity and dynamics of mitochondria under both optimal and stress conditions. The polypeptide is Probable cardiolipin synthase (CMP-forming) (CLS) (Drosophila melanogaster (Fruit fly)).